We begin with the raw amino-acid sequence, 592 residues long: Bifunctional enzyme BirA/CoaX (592 aa).

The interval 1–329 is biotin--protein ligase; the sequence is MTVLKPSHWR…ISLRPDNRSV (329 aa). Positions 83-259 constitute a BPL/LPL catalytic domain; the sequence is QTALKHECAS…ELGAVLEQYA (177 aa). Residues 336 to 592 are type III pantothenate kinase; sequence DSERFLLLEG…AAEGGESEHA (257 aa). ATP is bound at residue 344-351; sequence EGGNSRLK. Residues Tyr426 and 433-436 each bind substrate; that span reads GSDR. Asp435 functions as the Proton acceptor in the catalytic mechanism. Thr458 is an ATP binding site. Thr508 contributes to the substrate binding site.

This sequence in the N-terminal section; belongs to the biotin--protein ligase family. It in the C-terminal section; belongs to the type III pantothenate kinase family. Requires NH4(+) as cofactor. It depends on K(+) as a cofactor.

Its subcellular location is the cytoplasm. The enzyme catalyses biotin + L-lysyl-[protein] + ATP = N(6)-biotinyl-L-lysyl-[protein] + AMP + diphosphate + H(+). The catalysed reaction is (R)-pantothenate + ATP = (R)-4'-phosphopantothenate + ADP + H(+). Its pathway is cofactor biosynthesis; coenzyme A biosynthesis; CoA from (R)-pantothenate: step 1/5. Functionally, activates biotin to form biotinyl-5'-adenylate and transfers the biotin moiety to biotin-accepting proteins. In terms of biological role, catalyzes the phosphorylation of pantothenate (Pan), the first step in CoA biosynthesis. The chain is Bifunctional enzyme BirA/CoaX (birA/coaX) from Neisseria gonorrhoeae (strain ATCC 700825 / FA 1090).